Here is a 59-residue protein sequence, read N- to C-terminus: QAVRYANGYTYDIETGQVSSPYTGRVYETKGKAPFYGFGFKYPYHYYPGYYHGYPHVFY.

Pyrrolidone carboxylic acid is present on Gln1.

This Limulus polyphemus (Atlantic horseshoe crab) protein is Cuticle protein 7 isoform b.